We begin with the raw amino-acid sequence, 328 residues long: Ferredoxin--NADP reductase 1 (328 aa).

Positions 28, 36, 41, 81, 116, 277, and 320 each coordinate FAD.

It belongs to the ferredoxin--NADP reductase type 2 family. As to quaternary structure, homodimer. It depends on FAD as a cofactor.

It carries out the reaction 2 reduced [2Fe-2S]-[ferredoxin] + NADP(+) + H(+) = 2 oxidized [2Fe-2S]-[ferredoxin] + NADPH. The polypeptide is Ferredoxin--NADP reductase 1 (Sulfolobus acidocaldarius (strain ATCC 33909 / DSM 639 / JCM 8929 / NBRC 15157 / NCIMB 11770)).